A 747-amino-acid polypeptide reads, in one-letter code: Ferrichrome outer membrane transporter/phage receptor (747 aa).

Positions Met-1 to Ala-33 are cleaved as a signal peptide. Residues Ala-34 to Glu-192 lie on the Periplasmic side of the membrane. The short motif at Asp-40–Ala-47 is the TonB box element. The TBDR plug domain occupies Pro-75 to Lys-187. Residues Arg-114, Gln-133, and Phe-148–Tyr-149 each bind ferrichrome. Residues Glu-192–Phe-747 enclose the TBDR beta-barrel domain. The chain crosses the membrane as a beta stranded span at residues Pro-193 to Ala-201. Over Gly-202 to Leu-206 the chain is Extracellular. A beta stranded transmembrane segment spans residues Phe-207–Asp-215. Residues Ser-216–Val-222 are Periplasmic-facing. A beta stranded membrane pass occupies residues Tyr-223–Ala-231. The Extracellular portion of the chain corresponds to Arg-232–Arg-245. Residues Tyr-246–Arg-255 form a beta stranded membrane-spanning segment. At Pro-256–Lys-259 the chain is on the periplasmic side. The beta stranded transmembrane segment at Thr-260 to Phe-268 threads the bilayer. The Extracellular segment spans residues Gln-269–Glu-312. Residue Tyr-277–Trp-279 coordinates ferrichrome. A beta stranded membrane pass occupies residues Lys-313 to His-321. Residues Glu-322–Thr-326 lie on the Periplasmic side of the membrane. The beta stranded transmembrane segment at Phe-327–Phe-335 threads the bilayer. Residues Ala-336–Asn-387 are Extracellular-facing. Position 346–348 (Tyr-346–Tyr-348) interacts with ferrichrome. Cys-351 and Cys-362 form a disulfide bridge. The chain crosses the membrane as a beta stranded span at residues Phe-388 to Ser-396. The Periplasmic portion of the chain corresponds to Lys-397–Asp-404. Residues His-405–Phe-413 form a beta stranded membrane-spanning segment. Over Met-414–Gln-464 the chain is Extracellular. A ferrichrome-binding site is contributed by Phe-424. The beta stranded transmembrane segment at Thr-465–Ala-473 threads the bilayer. At Gln-474–Lys-477 the chain is on the periplasmic side. The chain crosses the membrane as a beta stranded span at residues Val-478–Tyr-486. Topologically, residues Asp-487 to Gln-508 are extracellular. A beta stranded transmembrane segment spans residues Phe-509–Tyr-517. The Periplasmic portion of the chain corresponds to Leu-518–Gly-522. The chain crosses the membrane as a beta stranded span at residues Val-523–Glu-531. Residues Ser-532–Gly-551 lie on the Extracellular side of the membrane. A beta stranded transmembrane segment spans residues Lys-552–Tyr-560. Residues Val-561–Arg-565 are Periplasmic-facing. A beta stranded transmembrane segment spans residues Pro-566 to Tyr-574. Residues Asn-575–Arg-601 are Extracellular-facing. A beta stranded membrane pass occupies residues Gly-602 to Ala-610. Over Leu-611–Ala-613 the chain is Periplasmic. The beta stranded transmembrane segment at Ser-614 to Thr-622 threads the bilayer. Residues Tyr-623–His-645 lie on the Extracellular side of the membrane. A beta stranded membrane pass occupies residues Met-646 to Thr-654. The Periplasmic segment spans residues Phe-655–Ser-661. The chain crosses the membrane as a beta stranded span at residues Gly-662–Arg-670. Residues Tyr-671–Thr-689 lie on the Extracellular side of the membrane. Residues Val-690–Asp-698 form a beta stranded membrane-spanning segment. Residues Leu-699 to Ala-705 are Periplasmic-facing. Residues Gly-706–Asn-714 traverse the membrane as a beta stranded segment. Residues Asn-715–Arg-737 are Extracellular-facing. Cys-725 and Cys-731 are oxidised to a cystine. Positions Gly-730–Phe-747 match the TonB C-terminal box motif. Residue Ala-735 participates in ferrichrome binding. The chain crosses the membrane as a beta stranded span at residues Gln-738 to Arg-746. Phe-747 is a topological domain (periplasmic).

Belongs to the TonB-dependent receptor family. Monomer. Interacts with TonB. Interacts with Escherichia phage T5 receptor-binding protein pb5 (RBP-pb5); this interaction is necessary for the entry of the viral genome into the host cell.

It is found in the cell outer membrane. Its activity is regulated as follows. Binding of ferrichrome or colicin M enhances the interaction between FhuA and TonB. TonB activates FhuA through interaction with the beta-barrel. In terms of biological role, involved in the uptake of iron in complex with ferrichrome, a hydroxamate-type siderophore. Binds and transports ferrichrome-iron across the outer membrane. In addition to its role in ferrichrome-iron transport, transports the antibiotic albomycin, which is a structural analog of ferrichrome, and acts as a receptor for colicin M, microcin J25 and bacteriophages T1, T5, phi80 and UC-1. The energy source, which is required for all FhuA functions except infection by phage T5, is provided by the inner membrane TonB system. This chain is Ferrichrome outer membrane transporter/phage receptor, found in Escherichia coli (strain K12).